The sequence spans 334 residues: Cytoskeleton protein RodZ (334 aa).

Residues methionine 1–glycine 111 are Cytoplasmic-facing. In terms of domain architecture, HTH cro/C1-type spans leucine 19–leucine 71. The H-T-H motif DNA-binding region spans glutamine 30–glutamate 49. The chain crosses the membrane as a helical; Signal-anchor for type II membrane protein span at residues tryptophan 112–tryptophan 132. Topologically, residues tryptophan 133–glutamine 334 are periplasmic. The interval leucine 154–glycine 241 is disordered. Low complexity-rich tracts occupy residues threonine 176–alanine 211 and threonine 219–glycine 241.

This sequence belongs to the RodZ family.

The protein resides in the cell inner membrane. Its function is as follows. Cytoskeletal protein that is involved in cell-shape control through regulation of the length of the long axis. The chain is Cytoskeleton protein RodZ from Salmonella choleraesuis (strain SC-B67).